Reading from the N-terminus, the 371-residue chain is Alanine racemase (371 aa).

The active-site Proton acceptor; specific for D-alanine is the Lys40. An N6-(pyridoxal phosphate)lysine modification is found at Lys40. Arg136 lines the substrate pocket. Tyr263 functions as the Proton acceptor; specific for L-alanine in the catalytic mechanism. Met310 contributes to the substrate binding site.

This sequence belongs to the alanine racemase family. Pyridoxal 5'-phosphate is required as a cofactor.

The enzyme catalyses L-alanine = D-alanine. It participates in amino-acid biosynthesis; D-alanine biosynthesis; D-alanine from L-alanine: step 1/1. In terms of biological role, catalyzes the interconversion of L-alanine and D-alanine. May also act on other amino acids. The protein is Alanine racemase (alr) of Streptococcus mutans serotype c (strain ATCC 700610 / UA159).